Here is a 376-residue protein sequence, read N- to C-terminus: MYKKILIRYGELVLKGKNRTTFIKQLGSNIKEILNTEYEMEFDRMYIPYSEENLKNLKYVFGISSFSPVIETNKNLEDIQSAITKLINKNASTFKIAARRNDKSFELNSDQLNNLLGGFVLKNSHLKVNVKNPDQIFNIEIRKNSVYVFDKSINGIGGIPVGISGKVLHLISGGFDSPVAAYLLMKRGFKVDFLTFVTPPQTDETTIDKIKNLTKVLSRYQKESNLYVCDFSLISSYIEFTEFKSFKIILMRRSFYRIASELAKQNEILMISNGENLAQVASQTNESMAVIGSSIKNEILRPLLTYDKNEIINLSKVIETHDISILKSKEACELFAPKNPVTKPTEAKTLRIESKLDELKTYEEIVLNQKMKKFAI.

A THUMP domain is found at 51–152 (EENLKNLKYV…KNSVYVFDKS (102 aa)). ATP contacts are provided by residues 170–171 (LI), 195–196 (TF), R252, G274, and Q283.

Belongs to the ThiI family.

The protein resides in the cytoplasm. The catalysed reaction is [ThiI sulfur-carrier protein]-S-sulfanyl-L-cysteine + a uridine in tRNA + 2 reduced [2Fe-2S]-[ferredoxin] + ATP + H(+) = [ThiI sulfur-carrier protein]-L-cysteine + a 4-thiouridine in tRNA + 2 oxidized [2Fe-2S]-[ferredoxin] + AMP + diphosphate. The enzyme catalyses [ThiS sulfur-carrier protein]-C-terminal Gly-Gly-AMP + S-sulfanyl-L-cysteinyl-[cysteine desulfurase] + AH2 = [ThiS sulfur-carrier protein]-C-terminal-Gly-aminoethanethioate + L-cysteinyl-[cysteine desulfurase] + A + AMP + 2 H(+). It participates in cofactor biosynthesis; thiamine diphosphate biosynthesis. Functionally, catalyzes the ATP-dependent transfer of a sulfur to tRNA to produce 4-thiouridine in position 8 of tRNAs, which functions as a near-UV photosensor. Also catalyzes the transfer of sulfur to the sulfur carrier protein ThiS, forming ThiS-thiocarboxylate. This is a step in the synthesis of thiazole, in the thiamine biosynthesis pathway. The sulfur is donated as persulfide by IscS. The polypeptide is Probable tRNA sulfurtransferase (Mycoplasmopsis synoviae (strain 53) (Mycoplasma synoviae)).